The sequence spans 594 residues: DNA ligase (594 aa).

Glu280 contacts ATP. Lys282 acts as the N6-AMP-lysine intermediate in catalysis. ATP contacts are provided by Arg287, Arg316, Glu345, Phe385, Arg456, and Lys462.

It belongs to the ATP-dependent DNA ligase family. Mg(2+) serves as cofactor.

It catalyses the reaction ATP + (deoxyribonucleotide)n-3'-hydroxyl + 5'-phospho-(deoxyribonucleotide)m = (deoxyribonucleotide)n+m + AMP + diphosphate.. Functionally, DNA ligase that seals nicks in double-stranded DNA during DNA replication, DNA recombination and DNA repair. This chain is DNA ligase, found in Halorubrum lacusprofundi (strain ATCC 49239 / DSM 5036 / JCM 8891 / ACAM 34).